The following is a 185-amino-acid chain: ATP-dependent protease subunit HslV (185 aa).

T12 is a catalytic residue. Residues S168, C171, and T174 each contribute to the Na(+) site.

Belongs to the peptidase T1B family. HslV subfamily. In terms of assembly, a double ring-shaped homohexamer of HslV is capped on each side by a ring-shaped HslU homohexamer. The assembly of the HslU/HslV complex is dependent on binding of ATP.

The protein localises to the cytoplasm. It catalyses the reaction ATP-dependent cleavage of peptide bonds with broad specificity.. Its activity is regulated as follows. Allosterically activated by HslU binding. In terms of biological role, protease subunit of a proteasome-like degradation complex believed to be a general protein degrading machinery. The protein is ATP-dependent protease subunit HslV of Jannaschia sp. (strain CCS1).